Here is a 970-residue protein sequence, read N- to C-terminus: Isoleucine--tRNA ligase (970 aa).

The 'HIGH' region motif lies at 65-75 (PYANGHLHIGH). Position 608 (Glu608) interacts with L-isoleucyl-5'-AMP. The 'KMSKS' region motif lies at 649–653 (KMSKS). Lys652 is an ATP binding site. Zn(2+)-binding residues include Cys943, Cys946, Cys962, and Cys965.

The protein belongs to the class-I aminoacyl-tRNA synthetase family. IleS type 1 subfamily. In terms of assembly, monomer. Requires Zn(2+) as cofactor.

The protein resides in the cytoplasm. The catalysed reaction is tRNA(Ile) + L-isoleucine + ATP = L-isoleucyl-tRNA(Ile) + AMP + diphosphate. Catalyzes the attachment of isoleucine to tRNA(Ile). As IleRS can inadvertently accommodate and process structurally similar amino acids such as valine, to avoid such errors it has two additional distinct tRNA(Ile)-dependent editing activities. One activity is designated as 'pretransfer' editing and involves the hydrolysis of activated Val-AMP. The other activity is designated 'posttransfer' editing and involves deacylation of mischarged Val-tRNA(Ile). This chain is Isoleucine--tRNA ligase, found in Ruegeria pomeroyi (strain ATCC 700808 / DSM 15171 / DSS-3) (Silicibacter pomeroyi).